The following is an 82-amino-acid chain: Ubiquinol-cytochrome-c reductase complex assembly factor 3 (82 aa).

Residues 1 to 6 (METVRR) are Mitochondrial matrix-facing. The chain crosses the membrane as a helical span at residues 7 to 29 (IVKGTLLLGFCTGIGGDLWVLVA). Residues 30 to 82 (PGQERRLEMRMNYPEANPPMLAEAHKRNEMVLKVIEESAKTNENMARRSPWSS) are Mitochondrial intermembrane-facing.

This sequence belongs to the UQCC3 family. Associates with the ubiquinol-cytochrome c reductase complex (mitochondrial respiratory chain complex III or cytochrome b-c1 complex).

The protein localises to the mitochondrion inner membrane. Functionally, required for the assembly of the ubiquinol-cytochrome c reductase complex (mitochondrial respiratory chain complex III or cytochrome b-c1 complex), mediating cytochrome b recruitment and probably stabilization within the complex. Thereby, plays an important role in ATP production by mitochondria. Cardiolipin-binding protein, it may also control the cardiolipin composition of mitochondria membranes and their morphology. In Xenopus laevis (African clawed frog), this protein is Ubiquinol-cytochrome-c reductase complex assembly factor 3.